Consider the following 102-residue polypeptide: Major basic nuclear protein 2 (102 aa).

The segment covering 1-11 (MKAMKATKKAM) has biased composition (basic residues). The disordered stretch occupies residues 1-43 (MKAMKATKKAMTKTGLAEALAPKPSSARRIAPPSSRAWPPSAQ). Residues 21–42 (APKPSSARRIAPPSSRAWPPSA) are compositionally biased toward low complexity.

The protein localises to the nucleus. This is Major basic nuclear protein 2 (HCc2) from Crypthecodinium cohnii (Dinoflagellate).